A 272-amino-acid chain; its full sequence is Tryptophan synthase alpha chain (272 aa).

Catalysis depends on proton acceptor residues glutamate 49 and aspartate 60.

The protein belongs to the TrpA family. In terms of assembly, tetramer of two alpha and two beta chains.

The enzyme catalyses (1S,2R)-1-C-(indol-3-yl)glycerol 3-phosphate + L-serine = D-glyceraldehyde 3-phosphate + L-tryptophan + H2O. The protein operates within amino-acid biosynthesis; L-tryptophan biosynthesis; L-tryptophan from chorismate: step 5/5. The alpha subunit is responsible for the aldol cleavage of indoleglycerol phosphate to indole and glyceraldehyde 3-phosphate. The polypeptide is Tryptophan synthase alpha chain (Hydrogenovibrio crunogenus (strain DSM 25203 / XCL-2) (Thiomicrospira crunogena)).